A 305-amino-acid chain; its full sequence is UDP-N-acetylenolpyruvoylglucosamine reductase 2 (305 aa).

The FAD-binding PCMH-type domain occupies 33–197 (VGGKADVFVA…LEARFELEEG (165 aa)). R176 is a catalytic residue. S226 acts as the Proton donor in catalysis. Residue E296 is part of the active site.

It belongs to the MurB family. FAD is required as a cofactor.

It localises to the cytoplasm. It catalyses the reaction UDP-N-acetyl-alpha-D-muramate + NADP(+) = UDP-N-acetyl-3-O-(1-carboxyvinyl)-alpha-D-glucosamine + NADPH + H(+). The protein operates within cell wall biogenesis; peptidoglycan biosynthesis. Its function is as follows. Cell wall formation. In Bacillus cereus (strain ATCC 14579 / DSM 31 / CCUG 7414 / JCM 2152 / NBRC 15305 / NCIMB 9373 / NCTC 2599 / NRRL B-3711), this protein is UDP-N-acetylenolpyruvoylglucosamine reductase 2 (murB2).